Consider the following 406-residue polypeptide: MNKALKILQERGFIQQCTDLQALSDRMDKGQIAFYTGTDPTGPSLHIGHMVPIFALKHLCREGHKGVVLVGGGTSRIGDPSGKTEMRKMLSYDELDKNAASIQKQIEKFLAKDIKNVRFVNNKDWLADLNYIDFLRDIGSHFSVNKMLSFEAYKKRMETGLSFLEFNYQLLQSYDFLMLNQNYNIELQIGGDDQWGNMVAGSDLIRRKGGGEVFALTFSLVTRADGQKMGKSEKGAIFLDTALVSPYDFFQYWRNTADADVEKFMLLFTFLSIEEIKSVCAGDINKAKERLAFEVTALIHGKEEAEKALEGARAAFSGGGNKDAMPTANLSLSKLNEGIGIIDLFAEAGLASTKSDARRLVEQGGAFINEEKISDIKALIGKEKLDKDNEMILRAGKKRFMRIIFS.

Residue tyrosine 35 coordinates L-tyrosine. Residues 40 to 49 carry the 'HIGH' region motif; the sequence is PTGPSLHIGH. The L-tyrosine site is built by tyrosine 168 and glutamine 172. The 'KMSKS' region signature appears at 228–232; that stretch reads KMGKS. ATP is bound at residue lysine 231. In terms of domain architecture, S4 RNA-binding spans 339–405; the sequence is IGIIDLFAEA…GKKRFMRIIF (67 aa).

This sequence belongs to the class-I aminoacyl-tRNA synthetase family. TyrS type 1 subfamily. In terms of assembly, homodimer.

The protein resides in the cytoplasm. The enzyme catalyses tRNA(Tyr) + L-tyrosine + ATP = L-tyrosyl-tRNA(Tyr) + AMP + diphosphate + H(+). Its function is as follows. Catalyzes the attachment of tyrosine to tRNA(Tyr) in a two-step reaction: tyrosine is first activated by ATP to form Tyr-AMP and then transferred to the acceptor end of tRNA(Tyr). The sequence is that of Tyrosine--tRNA ligase from Treponema denticola (strain ATCC 35405 / DSM 14222 / CIP 103919 / JCM 8153 / KCTC 15104).